Here is a 132-residue protein sequence, read N- to C-terminus: MAVTHSVGDMLTKIRNASRVKHESVDLKMSKINRSILDILKEEGYIKNYNIFDKKGIPFIKAMLNYDGKRNPAINRIDAISTPGRKVYSSYKNMPRIKNGYGILIVSSSKGVITGKQAKDNKVGGELICSVW.

It belongs to the universal ribosomal protein uS8 family. As to quaternary structure, part of the 30S ribosomal subunit. Contacts proteins S5 and S12.

Functionally, one of the primary rRNA binding proteins, it binds directly to 16S rRNA central domain where it helps coordinate assembly of the platform of the 30S subunit. This chain is Small ribosomal subunit protein uS8, found in Borrelia duttonii (strain Ly).